The primary structure comprises 137 residues: ER-derived vesicles protein erv14 (137 aa).

Over 1–9 (MMSFGSFVY) the chain is Cytoplasmic. A helical membrane pass occupies residues 10–30 (IACLLLNGANMLLQIFCVIMF). Residues 31–62 (SDLEMDYINPIDLCNKLNDLVMPEIISHTLVT) are Extracellular-facing. A helical transmembrane segment spans residues 63 to 83 (LLLLLGKKWLLFLANLPLLVF). The Cytoplasmic segment spans residues 84-114 (HANQVIHKTHILDATEIFRQLGRHKRDNFIK). Residues 115–135 (VTFYLIMFFTLLYCMVMSLIQ) form a helical membrane-spanning segment. The Extracellular segment spans residues 136–137 (EE).

This sequence belongs to the cornichon family.

It localises to the endoplasmic reticulum. Its subcellular location is the membrane. The protein localises to the golgi apparatus membrane. Regulates export of the secretory proteins from the endoplasmic reticulum in COPII-coated vesicles. In Schizosaccharomyces pombe (strain 972 / ATCC 24843) (Fission yeast), this protein is ER-derived vesicles protein erv14 (erv14).